The primary structure comprises 65 residues: Large ribosomal subunit protein bL33c (65 aa).

Belongs to the bacterial ribosomal protein bL33 family.

Its subcellular location is the plastid. It localises to the chloroplast. This chain is Large ribosomal subunit protein bL33c, found in Gracilaria tenuistipitata var. liui (Red alga).